Consider the following 303-residue polypeptide: Quinolinate synthase (303 aa).

Residues His-23 and Ser-40 each contribute to the iminosuccinate site. Cys-85 provides a ligand contact to [4Fe-4S] cluster. Residues 111–113 and Ser-128 each bind iminosuccinate; that span reads YVN. A [4Fe-4S] cluster-binding site is contributed by Cys-171. Iminosuccinate-binding positions include 197-199 and Thr-214; that span reads HPE. Cys-259 is a binding site for [4Fe-4S] cluster.

It belongs to the quinolinate synthase family. Type 2 subfamily. [4Fe-4S] cluster serves as cofactor.

Its subcellular location is the cytoplasm. It catalyses the reaction iminosuccinate + dihydroxyacetone phosphate = quinolinate + phosphate + 2 H2O + H(+). The protein operates within cofactor biosynthesis; NAD(+) biosynthesis; quinolinate from iminoaspartate: step 1/1. Functionally, catalyzes the condensation of iminoaspartate with dihydroxyacetone phosphate to form quinolinate. This chain is Quinolinate synthase, found in Thermodesulfovibrio yellowstonii (strain ATCC 51303 / DSM 11347 / YP87).